The sequence spans 673 residues: UvrABC system protein B (673 aa).

The Helicase ATP-binding domain occupies Glu-26–Pro-415. Residue Gly-39–Thr-46 coordinates ATP. The Beta-hairpin signature appears at Tyr-92–Val-115. The 167-residue stretch at Gln-431–Leu-597 folds into the Helicase C-terminal domain. Positions Ala-608–Met-627 are disordered. Residues Gln-633–Leu-668 form the UVR domain.

The protein belongs to the UvrB family. As to quaternary structure, forms a heterotetramer with UvrA during the search for lesions. Interacts with UvrC in an incision complex.

The protein resides in the cytoplasm. Functionally, the UvrABC repair system catalyzes the recognition and processing of DNA lesions. A damage recognition complex composed of 2 UvrA and 2 UvrB subunits scans DNA for abnormalities. Upon binding of the UvrA(2)B(2) complex to a putative damaged site, the DNA wraps around one UvrB monomer. DNA wrap is dependent on ATP binding by UvrB and probably causes local melting of the DNA helix, facilitating insertion of UvrB beta-hairpin between the DNA strands. Then UvrB probes one DNA strand for the presence of a lesion. If a lesion is found the UvrA subunits dissociate and the UvrB-DNA preincision complex is formed. This complex is subsequently bound by UvrC and the second UvrB is released. If no lesion is found, the DNA wraps around the other UvrB subunit that will check the other stand for damage. This is UvrABC system protein B from Escherichia coli O6:H1 (strain CFT073 / ATCC 700928 / UPEC).